Consider the following 311-residue polypeptide: Methionyl-tRNA formyltransferase (311 aa).

109 to 112 contributes to the (6S)-5,6,7,8-tetrahydrofolate binding site; it reads SLLP.

This sequence belongs to the Fmt family.

It carries out the reaction L-methionyl-tRNA(fMet) + (6R)-10-formyltetrahydrofolate = N-formyl-L-methionyl-tRNA(fMet) + (6S)-5,6,7,8-tetrahydrofolate + H(+). Functionally, attaches a formyl group to the free amino group of methionyl-tRNA(fMet). The formyl group appears to play a dual role in the initiator identity of N-formylmethionyl-tRNA by promoting its recognition by IF2 and preventing the misappropriation of this tRNA by the elongation apparatus. The polypeptide is Methionyl-tRNA formyltransferase (Staphylococcus aureus (strain USA300)).